Consider the following 145-residue polypeptide: Cell division protein SepF (145 aa).

It belongs to the SepF family. As to quaternary structure, homodimer. Interacts with FtsZ.

Its subcellular location is the cytoplasm. In terms of biological role, cell division protein that is part of the divisome complex and is recruited early to the Z-ring. Probably stimulates Z-ring formation, perhaps through the cross-linking of FtsZ protofilaments. Its function overlaps with FtsA. In Lactobacillus helveticus (strain DPC 4571), this protein is Cell division protein SepF.